The primary structure comprises 126 residues: UPF0344 protein ABC2900 (126 aa).

Transmembrane regions (helical) follow at residues alanine 16–phenylalanine 36, alanine 43–alanine 63, leucine 66–isoleucine 86, and glycine 104–isoleucine 124.

The protein belongs to the UPF0344 family.

The protein resides in the cell membrane. The protein is UPF0344 protein ABC2900 of Shouchella clausii (strain KSM-K16) (Alkalihalobacillus clausii).